Consider the following 390-residue polypeptide: MPEGPELHLASQFVNEACRALVFGGCVEKSSVSRNPEVPFESSAYRISASARGKELRLILSPLPGAQPQQEPLALVFRFGMSGSFQLVPREELPRHAHLRFYTAPPGPRLALCFVDIRRFGRWDLGGKWQPGRGPCVLQEYQQFRENVLRNLADKAFDRPICEALLDQRFFNGIGNYLRAEILYRLKIPPFEKARSVLEALQQHRPSPELTLSQKIRTKLQNPDLLELCHSVPKEVVQLGGKGYGSESGEEDFAAFRAWLRCYGMPGMSSLQDRHGRTIWFQGDPGPLAPKGRKSRKKKSKATQLSPEDRVEDALPPSKAPSRTRRAKRDLPKRTATQRPEGTSLQQDPEAPTVPKKGRRKGRQAASGHCRPRKVKADIPSLEPEGTSAS.

The active-site Schiff-base intermediate with DNA is Pro2. The Proton donor role is filled by Glu3. Lys54 functions as the Proton donor; for beta-elimination activity in the catalytic mechanism. Residue Asn176 coordinates DNA. A disordered region spans residues 278 to 390; it reads TIWFQGDPGP…SLEPEGTSAS (113 aa). The segment covering 291–301 has biased composition (basic residues); that stretch reads KGRKSRKKKSK. The span at 335-347 shows a compositional bias: polar residues; it reads TATQRPEGTSLQQ. Arg339 is a DNA binding site. The active-site Proton donor; for delta-elimination activity is the Arg339.

This sequence belongs to the FPG family. Ubiquitous.

The protein resides in the cytoplasm. Its subcellular location is the cytoskeleton. It localises to the microtubule organizing center. It is found in the centrosome. The protein localises to the nucleus. The protein resides in the chromosome. It carries out the reaction 2'-deoxyribonucleotide-(2'-deoxyribose 5'-phosphate)-2'-deoxyribonucleotide-DNA = a 3'-end 2'-deoxyribonucleotide-(2,3-dehydro-2,3-deoxyribose 5'-phosphate)-DNA + a 5'-end 5'-phospho-2'-deoxyribonucleoside-DNA + H(+). In terms of biological role, involved in base excision repair of DNA damaged by oxidation or by mutagenic agents. Acts as a DNA glycosylase that recognizes and removes damaged bases. Has a preference for oxidized pyrimidines, such as thymine glycol, formamidopyrimidine (Fapy) and 5-hydroxyuracil. Has marginal activity towards 8-oxoguanine. Has AP (apurinic/apyrimidinic) lyase activity and introduces nicks in the DNA strand. Cleaves the DNA backbone by beta-delta elimination to generate a single-strand break at the site of the removed base with both 3'- and 5'-phosphates. Has DNA glycosylase/lyase activity towards mismatched uracil and thymine, in particular in U:C and T:C mismatches. Specifically binds 5-hydroxymethylcytosine (5hmC), suggesting that it acts as a specific reader of 5hmC. In Homo sapiens (Human), this protein is Endonuclease 8-like 1 (NEIL1).